We begin with the raw amino-acid sequence, 87 residues long: RNA-binding protein Hfq (87 aa).

Residues 9-68 form the Sm domain; that stretch reads DPFLNALRRERIPVSIYLVNGIKLQGQIESFDQFVILLKNTVSQMVYKHAISTVVPARAV.

The protein belongs to the Hfq family. Homohexamer.

Its function is as follows. RNA chaperone that binds small regulatory RNA (sRNAs) and mRNAs to facilitate mRNA translational regulation in response to envelope stress, environmental stress and changes in metabolite concentrations. Also binds with high specificity to tRNAs. The chain is RNA-binding protein Hfq from Aeromonas hydrophila subsp. hydrophila (strain ATCC 7966 / DSM 30187 / BCRC 13018 / CCUG 14551 / JCM 1027 / KCTC 2358 / NCIMB 9240 / NCTC 8049).